The following is a 420-amino-acid chain: MVSRQEQFEQVQAVKKSINTASEEVKNQALLAMADHLVAATEEILAANALDMAAAKGKISDVMLDRLYLDADRIEAMARGIREVVALPDPIGEVLETSQLENGLVITKKRVAMGVIGIIYESRPNVTSDAAALTLKSGNAVVLRSGKDAYQTTHAIVTALKKGLETTTIHPNVIQLVEDTSRESSYAMMKAKGYLDLLIPRGGAGLINAVVENAIVPVIETGTGIVHVYVDKDADEDKALSIINNAKTSRPSVCNAMEVLLVHENKAASFLPRLEQVLVAERKEAGLEPIQFRLDSKASQFVSGQAAETQDFDTEFLDYVLAVKVVSSLEEAVAHIESHSTHHSDAIVTENAEAAAYFTDQVDSAAVYVNASTRFTDGGQFGLGCEMGISTQKLHARGPMGLKELTSYKYVVAGDGQIRE.

The protein belongs to the gamma-glutamyl phosphate reductase family.

It localises to the cytoplasm. It carries out the reaction L-glutamate 5-semialdehyde + phosphate + NADP(+) = L-glutamyl 5-phosphate + NADPH + H(+). It functions in the pathway amino-acid biosynthesis; L-proline biosynthesis; L-glutamate 5-semialdehyde from L-glutamate: step 2/2. Catalyzes the NADPH-dependent reduction of L-glutamate 5-phosphate into L-glutamate 5-semialdehyde and phosphate. The product spontaneously undergoes cyclization to form 1-pyrroline-5-carboxylate. In Streptococcus pneumoniae serotype 4 (strain ATCC BAA-334 / TIGR4), this protein is Gamma-glutamyl phosphate reductase.